The chain runs to 348 residues: Ion-translocating oxidoreductase complex subunit D (348 aa).

The next 5 helical transmembrane spans lie at 15-35 (LTAKFMLWVMVAMLPALGMQA), 36-56 (YFFGYGVFIQVFIALLLAVAI), 67-87 (LTAFYVADLSGVLTALILAIS), 88-108 (IPPYAPYWIIVIGIIVALLLA), and 125-145 (VAYALLLVSFPVQMTGWLVPI). Thr186 carries the FMN phosphoryl threonine modification. The next 5 helical transmembrane spans lie at 212–232 (LFANGWWQINLAFLAGGLLLI), 241–261 (IPAAMLGMFALLSGLTDLLLP), 265–285 (LNVVSQLFSGAMMFGAFFIAT), 298–318 (LIFGGLIGLFVYLIRYYGNYP), and 320–340 (AVAFSVLLANICVPLIDHYTQ).

This sequence belongs to the NqrB/RnfD family. The complex is composed of six subunits: RnfA, RnfB, RnfC, RnfD, RnfE and RnfG. Requires FMN as cofactor.

It is found in the cell inner membrane. Its function is as follows. Part of a membrane-bound complex that couples electron transfer with translocation of ions across the membrane. The polypeptide is Ion-translocating oxidoreductase complex subunit D (Actinobacillus pleuropneumoniae serotype 3 (strain JL03)).